The chain runs to 100 residues: Large ribosomal subunit protein uL23 (100 aa).

The protein belongs to the universal ribosomal protein uL23 family. As to quaternary structure, part of the 50S ribosomal subunit. Contacts protein L29, and trigger factor when it is bound to the ribosome.

One of the early assembly proteins it binds 23S rRNA. One of the proteins that surrounds the polypeptide exit tunnel on the outside of the ribosome. Forms the main docking site for trigger factor binding to the ribosome. The chain is Large ribosomal subunit protein uL23 from Mycolicibacterium smegmatis (strain ATCC 700084 / mc(2)155) (Mycobacterium smegmatis).